The primary structure comprises 155 residues: D-aminoacyl-tRNA deacylase (155 aa).

The Gly-cisPro motif, important for rejection of L-amino acids signature appears at 137 to 138 (GP).

Belongs to the DTD family. As to quaternary structure, homodimer.

It localises to the cytoplasm. It carries out the reaction glycyl-tRNA(Ala) + H2O = tRNA(Ala) + glycine + H(+). The enzyme catalyses a D-aminoacyl-tRNA + H2O = a tRNA + a D-alpha-amino acid + H(+). In terms of biological role, an aminoacyl-tRNA editing enzyme that deacylates mischarged D-aminoacyl-tRNAs. Also deacylates mischarged glycyl-tRNA(Ala), protecting cells against glycine mischarging by AlaRS. Acts via tRNA-based rather than protein-based catalysis; rejects L-amino acids rather than detecting D-amino acids in the active site. By recycling D-aminoacyl-tRNA to D-amino acids and free tRNA molecules, this enzyme counteracts the toxicity associated with the formation of D-aminoacyl-tRNA entities in vivo and helps enforce protein L-homochirality. The polypeptide is D-aminoacyl-tRNA deacylase (Roseiflexus sp. (strain RS-1)).